The chain runs to 289 residues: ATP synthase gamma chain (289 aa).

This sequence belongs to the ATPase gamma chain family. As to quaternary structure, F-type ATPases have 2 components, CF(1) - the catalytic core - and CF(0) - the membrane proton channel. CF(1) has five subunits: alpha(3), beta(3), gamma(1), delta(1), epsilon(1). CF(0) has three main subunits: a, b and c.

It localises to the cell membrane. Functionally, produces ATP from ADP in the presence of a proton gradient across the membrane. The gamma chain is believed to be important in regulating ATPase activity and the flow of protons through the CF(0) complex. This Buchnera aphidicola subsp. Melaphis rhois protein is ATP synthase gamma chain.